Reading from the N-terminus, the 261-residue chain is Carbonic anhydrase 1 (261 aa).

N-acetylalanine is present on alanine 2. An Alpha-carbonic anhydrase domain is found at 4–261 (PDWGYDDKNG…LKGRTVRASF (258 aa)). Residue histidine 65 is the Proton donor/acceptor of the active site. Histidine 95, histidine 97, and histidine 120 together coordinate Zn(2+). Residues threonine 200 and 200-201 (TH) each bind substrate. The disordered stretch occupies residues 235 to 261 (EGDNPVPSQRNNRPTQPLKGRTVRASF). Positions 240 to 249 (VPSQRNNRPT) are enriched in polar residues.

This sequence belongs to the alpha-carbonic anhydrase family. It depends on Zn(2+) as a cofactor.

It is found in the cytoplasm. It catalyses the reaction hydrogencarbonate + H(+) = CO2 + H2O. The catalysed reaction is urea = cyanamide + H2O. Its activity is regulated as follows. Inhibited by acetazolamide. Its function is as follows. Catalyzes the reversible hydration of carbon dioxide. Can hydrate cyanamide to urea. The protein is Carbonic anhydrase 1 (CA1) of Macaca nemestrina (Pig-tailed macaque).